Reading from the N-terminus, the 453-residue chain is UDP-N-acetylmuramoylalanine--D-glutamate ligase (453 aa).

119-125 contacts ATP; sequence GTNGKTT.

This sequence belongs to the MurCDEF family.

The protein resides in the cytoplasm. It catalyses the reaction UDP-N-acetyl-alpha-D-muramoyl-L-alanine + D-glutamate + ATP = UDP-N-acetyl-alpha-D-muramoyl-L-alanyl-D-glutamate + ADP + phosphate + H(+). It participates in cell wall biogenesis; peptidoglycan biosynthesis. In terms of biological role, cell wall formation. Catalyzes the addition of glutamate to the nucleotide precursor UDP-N-acetylmuramoyl-L-alanine (UMA). This chain is UDP-N-acetylmuramoylalanine--D-glutamate ligase, found in Syntrophus aciditrophicus (strain SB).